Here is a 363-residue protein sequence, read N- to C-terminus: Adenosine deaminase (363 aa).

Positions 42 and 44 each coordinate Zn(2+). A purine D-ribonucleoside contacts are provided by residues 44–46, Asp172, and Gly201; that span reads HLD. The tract at residues 170–184 is gating helix loop; regulates binding affinity for substrates and thus substrate selectivity; the sequence is IGDTGHEAANIKASA. His226 lines the Zn(2+) pocket. Residues Glu229, His253, and Asp310 each coordinate a purine D-ribonucleoside. Asp310 contacts Zn(2+).

This sequence belongs to the metallo-dependent hydrolases superfamily. Adenosine and AMP deaminases family. Zn(2+) is required as a cofactor.

The catalysed reaction is adenosine + H2O + H(+) = inosine + NH4(+). It catalyses the reaction S-methyl-5'-thioadenosine + H2O + H(+) = S-methyl-5'-thioinosine + NH4(+). Its pathway is purine metabolism; purine nucleoside salvage. Inhibited by coformycin and methylthiocoformycin (MT-coformycin). Functionally, catalyzes the hydrolytic deamination of adenosine to produce inosine. Unlike mammalian adenosine deaminases, also catalyzes the deamination of 5'-methylthioadenosine (MTA), a by-product of polyamine biosynthesis, to produce 5'-methylthioinosine (MTI). Plays an essential role in the purine salvage pathway which allows the parasite to use host cell purines for the synthesis of nucleic acids. The polypeptide is Adenosine deaminase (Plasmodium cynomolgi (strain B)).